We begin with the raw amino-acid sequence, 90 residues long: Phosphoribosyl-ATP pyrophosphatase (90 aa).

Belongs to the PRA-PH family.

The protein resides in the cytoplasm. It carries out the reaction 1-(5-phospho-beta-D-ribosyl)-ATP + H2O = 1-(5-phospho-beta-D-ribosyl)-5'-AMP + diphosphate + H(+). It participates in amino-acid biosynthesis; L-histidine biosynthesis; L-histidine from 5-phospho-alpha-D-ribose 1-diphosphate: step 2/9. This chain is Phosphoribosyl-ATP pyrophosphatase, found in Streptomyces griseus subsp. griseus (strain JCM 4626 / CBS 651.72 / NBRC 13350 / KCC S-0626 / ISP 5235).